We begin with the raw amino-acid sequence, 89 residues long: Small ribosomal subunit protein uS15 (89 aa).

Over residues 1–13 (MYLTSEKKEEIFS) the composition is skewed to basic and acidic residues. A disordered region spans residues 1–24 (MYLTSEKKEEIFSKHGKGKNDTGS).

Belongs to the universal ribosomal protein uS15 family. Part of the 30S ribosomal subunit. Forms a bridge to the 50S subunit in the 70S ribosome, contacting the 23S rRNA.

Its function is as follows. One of the primary rRNA binding proteins, it binds directly to 16S rRNA where it helps nucleate assembly of the platform of the 30S subunit by binding and bridging several RNA helices of the 16S rRNA. In terms of biological role, forms an intersubunit bridge (bridge B4) with the 23S rRNA of the 50S subunit in the ribosome. The protein is Small ribosomal subunit protein uS15 of Christiangramia forsetii (strain DSM 17595 / CGMCC 1.15422 / KT0803) (Gramella forsetii).